Consider the following 212-residue polypeptide: Peptide methionine sulfoxide reductase MsrA (212 aa).

Cys52 is a catalytic residue.

It belongs to the MsrA Met sulfoxide reductase family.

It catalyses the reaction L-methionyl-[protein] + [thioredoxin]-disulfide + H2O = L-methionyl-(S)-S-oxide-[protein] + [thioredoxin]-dithiol. It carries out the reaction [thioredoxin]-disulfide + L-methionine + H2O = L-methionine (S)-S-oxide + [thioredoxin]-dithiol. Functionally, has an important function as a repair enzyme for proteins that have been inactivated by oxidation. Catalyzes the reversible oxidation-reduction of methionine sulfoxide in proteins to methionine. The sequence is that of Peptide methionine sulfoxide reductase MsrA from Salmonella paratyphi B (strain ATCC BAA-1250 / SPB7).